The primary structure comprises 173 residues: ATP synthase subunit b (173 aa).

A helical membrane pass occupies residues 19 to 39 (IVWSLIILVIVAVFFYKFFMP).

It belongs to the ATPase B chain family. As to quaternary structure, F-type ATPases have 2 components, F(1) - the catalytic core - and F(0) - the membrane proton channel. F(1) has five subunits: alpha(3), beta(3), gamma(1), delta(1), epsilon(1). F(0) has three main subunits: a(1), b(2) and c(10-14). The alpha and beta chains form an alternating ring which encloses part of the gamma chain. F(1) is attached to F(0) by a central stalk formed by the gamma and epsilon chains, while a peripheral stalk is formed by the delta and b chains.

It is found in the cell membrane. In terms of biological role, f(1)F(0) ATP synthase produces ATP from ADP in the presence of a proton or sodium gradient. F-type ATPases consist of two structural domains, F(1) containing the extramembraneous catalytic core and F(0) containing the membrane proton channel, linked together by a central stalk and a peripheral stalk. During catalysis, ATP synthesis in the catalytic domain of F(1) is coupled via a rotary mechanism of the central stalk subunits to proton translocation. Functionally, component of the F(0) channel, it forms part of the peripheral stalk, linking F(1) to F(0). This Bifidobacterium longum (strain NCC 2705) protein is ATP synthase subunit b.